Reading from the N-terminus, the 254-residue chain is 5'-nucleotidase SurE (254 aa).

Residues Asp8, Asp9, Ser38, and Asn91 each coordinate a divalent metal cation.

This sequence belongs to the SurE nucleotidase family. It depends on a divalent metal cation as a cofactor.

The protein resides in the cytoplasm. The enzyme catalyses a ribonucleoside 5'-phosphate + H2O = a ribonucleoside + phosphate. In terms of biological role, nucleotidase that shows phosphatase activity on nucleoside 5'-monophosphates. The protein is 5'-nucleotidase SurE of Anaeromyxobacter dehalogenans (strain 2CP-C).